Consider the following 625-residue polypeptide: 1-deoxy-D-xylulose-5-phosphate synthase (625 aa).

Thiamine diphosphate contacts are provided by residues H80 and 121–123 (GHS). D152 provides a ligand contact to Mg(2+). Thiamine diphosphate-binding positions include 153-154 (GA), N181, Y290, and E371. N181 lines the Mg(2+) pocket.

Belongs to the transketolase family. DXPS subfamily. In terms of assembly, homodimer. Mg(2+) serves as cofactor. Requires thiamine diphosphate as cofactor.

The enzyme catalyses D-glyceraldehyde 3-phosphate + pyruvate + H(+) = 1-deoxy-D-xylulose 5-phosphate + CO2. It participates in metabolic intermediate biosynthesis; 1-deoxy-D-xylulose 5-phosphate biosynthesis; 1-deoxy-D-xylulose 5-phosphate from D-glyceraldehyde 3-phosphate and pyruvate: step 1/1. Its function is as follows. Catalyzes the acyloin condensation reaction between C atoms 2 and 3 of pyruvate and glyceraldehyde 3-phosphate to yield 1-deoxy-D-xylulose-5-phosphate (DXP). The polypeptide is 1-deoxy-D-xylulose-5-phosphate synthase (Haemophilus influenzae (strain ATCC 51907 / DSM 11121 / KW20 / Rd)).